The following is a 417-amino-acid chain: Gamma-glutamyl phosphate reductase (417 aa).

Belongs to the gamma-glutamyl phosphate reductase family.

The protein resides in the cytoplasm. The enzyme catalyses L-glutamate 5-semialdehyde + phosphate + NADP(+) = L-glutamyl 5-phosphate + NADPH + H(+). It participates in amino-acid biosynthesis; L-proline biosynthesis; L-glutamate 5-semialdehyde from L-glutamate: step 2/2. Catalyzes the NADPH-dependent reduction of L-glutamate 5-phosphate into L-glutamate 5-semialdehyde and phosphate. The product spontaneously undergoes cyclization to form 1-pyrroline-5-carboxylate. This is Gamma-glutamyl phosphate reductase from Bacteroides thetaiotaomicron (strain ATCC 29148 / DSM 2079 / JCM 5827 / CCUG 10774 / NCTC 10582 / VPI-5482 / E50).